The sequence spans 465 residues: Biotin biosynthesis bifunctional protein BioCD (465 aa).

Residues 1-254 are malonyl-ACP O-methyltransferase; that stretch reads MTPFLPDRSI…AYGQWRKPRG (254 aa). ATP is bound by residues D234 and 263-268; that span reads GVGKTL. Residues 255–465 form a DTB synthetase region; it reads VFVTGTDTGV…DSLLSSNASR (211 aa). T267 contacts Mg(2+). The active site involves K283. T287 is a substrate binding site. Residues D295, 351 to 354, and 435 to 437 contribute to the ATP site; these read EGAG and PQL. Mg(2+) is bound by residues D295 and E351.

The protein in the N-terminal section; belongs to the methyltransferase superfamily. It in the C-terminal section; belongs to the dethiobiotin synthetase family. Mg(2+) is required as a cofactor.

It is found in the cytoplasm. It catalyses the reaction (7R,8S)-7,8-diammoniononanoate + CO2 + ATP = (4R,5S)-dethiobiotin + ADP + phosphate + 3 H(+). The catalysed reaction is malonyl-[ACP] + S-adenosyl-L-methionine = malonyl-[ACP] methyl ester + S-adenosyl-L-homocysteine. Its pathway is cofactor biosynthesis; biotin biosynthesis; biotin from 7,8-diaminononanoate: step 1/2. It participates in cofactor biosynthesis; biotin biosynthesis. Functionally, converts the free carboxyl group of a malonyl-thioester to its methyl ester by transfer of a methyl group from S-adenosyl-L-methionine (SAM). It allows synthesis of pimeloyl-ACP via the fatty acid synthetic pathway. In terms of biological role, catalyzes a mechanistically unusual reaction, the ATP-dependent insertion of CO2 between the N7 and N8 nitrogen atoms of 7,8-diaminopelargonic acid (DAPA, also called 7,8-diammoniononanoate) to form a ureido ring. The chain is Biotin biosynthesis bifunctional protein BioCD from Bordetella avium (strain 197N).